A 65-amino-acid polypeptide reads, in one-letter code: uncharacterized protein (65 aa).

Positions 1 to 22 (MKFIKLFTFLVYLFVTLTNVFA) are cleaved as a signal peptide.

This is an uncharacterized protein from Invertebrate iridescent virus 6 (IIV-6).